The primary structure comprises 1601 residues: MAQFQQTIDMQTLQAAAGRNSLVNDLASRRVYDNAVEELNARSRRPKVHFSKAVSTEQTLIATNAYPEFEISFTHTQSAVHSLAGGLRSLELEYLMMQVPFGSLTYDIGGNFSAHLFKGRDYVHCCMPNLDVRDIARHEGHKEAIYSYVNRLKRQQRPVPEYQRAAFNNYAENPHFVHCDKPFQQCELTTAYGTDTYAVALHSIYDIPVEEFGSALLRKNVKTCFAAFHFHENMLLDCDTVTLDEIGATFQKSGDNLSFFFHNESTLNYTHSFSNIIKYVCKTFFPASQRFVYHKEFLVTRVNTWYCKFTRVDTFTLFRGVYHNNVDCEEFYKAMDDAWHYKKTLAMLNAERTIFKDNAALNFWFPKVRDMVIVPLFDASITTGRMSRREIMVNKDFVYTVLNHIKTYQAKALTYANVLSFVESIRSRVIINGVTARSEWDTDKAILGPLAMTFFLITKLGHVQDEIILKKFQKFDRTTNELIWTSLCDALMGVIPSVKETLVRGGFVKVAEQALEIKVPELYCTFADRLVLQYKKAEEFQSCDLSKPLEESEKYYNALSELSVLENLDSFDLEAFKTLCQQKNVDPDMAAKVVVAIMKSELTLPFKKPTEEEISESLKPGEGSCAEHKEVLSLQNDAPFPCVKNLVEGSVPAYGMCPKGGGFDKLDVDIADFHLKSVDAVKKGTMMSAVYTGSIKVQQMKNYIDYLSASLAATVSNLCKVLRDVHGVDPESQEKSGVWDVRRGRWLLKPNAKSHAWGVAEDANHKLVIVLLNWDDGKPVCDETWFRVAVSSDSLIYSDMGKLKTLTSCSPNGEPPEPNAKVILVDGVPGCGKTKEIIEKVNFSEDLILVPGKEASKMIIRRANQAGVIRADKDNVRTVDSFLMHPSRRVFKRLFIDEGLMLHTGCVNFLLLLSQCDVAYVYGDTKQIPFICRVANFPYPAHFAKLVADEKEVRRVTLRCPADVTYFLNKKYDGAVMCTSAVERSVKAEVVRGKGALNPITLPLEGKILTFTQADKFELLEKGYKDVNTVHEVQGETYEKTAIVRLTSTPLEIISSASPHVLVALTRHTTCCKYYTVVLDPMVNVISEMEKLSNFLLDMYRVEAGVQYQLQIDAVFRDSNLFVQTPKSGDWRDMQFYYDALLPGNSTILNEFDAVTMNLRDISLNVKDCRIDFSKSVQLPKEQPIFLKPKIRTAAEMPRTAGLLENLVAMIKRNMNAPDLTGTIDIEDTASLVVEKFWDSYVDKEFSGTNEMTMTRESFSRWLSKQESSTVGQLADFNFVDLPAVDEYKHMIKSQPKQKLDLSIQDEYPALQTIVYHSKKINAIFGPMFSELTRMLLERIDSSKFLFYTRKTPAQIEDFFSDLDSTQAMEILELDISKYDKSQNEFHCAVEYKIWEKLGIDEWLAEVWKQGHRKTTLKDYTAGVKTCLWYQRKSGDVTTFIGNTIIIAACLSSMIPMDKVIKAAFCGDDSLIYIPKGLDLPDIQAGANLMWNFEAKLFRKKYGYFCGRYVIHHDRGAIVYYDPLKLISKLGCKHIRDVVHLEELRESLCDVASNLNNCAYFSQLDEAVAEVHKTAVGGSFAFCSIIKYLSDKRLFRDLFFV.

The interval 50–436 (FSKAVSTEQT…SRVIINGVTA (387 aa)) is methyltransferase. One can recognise an Alphavirus-like MT domain in the interval 72–280 (SFTHTQSAVH…HSFSNIIKYV (209 aa)). A (+)RNA virus helicase ATP-binding domain is found at 795 to 954 (LIYSDMGKLK…KLVADEKEVR (160 aa)). The interval 823 to 1076 (ILVDGVPGCG…RHTTCCKYYT (254 aa)) is helicase. 827–834 (GVPGCGKT) contributes to the ATP binding site. The 153-residue stretch at 955–1107 (RVTLRCPADV…DMYRVEAGVQ (153 aa)) folds into the (+)RNA virus helicase C-terminal domain. The region spanning 1369 to 1482 (MEILELDISK…YIPKGLDLPD (114 aa)) is the RdRp catalytic domain.

The protein belongs to the ssRNA positive-strand viruses RNA-directed RNA polymerase family. As to quaternary structure, heterodimer of a large and a small subunit.

The catalysed reaction is RNA(n) + a ribonucleoside 5'-triphosphate = RNA(n+1) + diphosphate. It catalyses the reaction ATP + H2O = ADP + phosphate + H(+). Functionally, is an RNA-dependent RNA polymerase active in viral RNA replication. Its function is as follows. Is a methyltransferase active in RNA capping and an RNA helicase. Methyltransferase displays a cytoplasmic capping enzyme activity. This function is necessary since all viral RNAs are synthesized in the cytoplasm, and host capping enzymes are restricted to the nucleus. Helicase region probably exhibits NTPase and RNA unwinding activities (Potential). It also acts as a suppressor of RNA-mediated gene silencing, also known as post-transcriptional gene silencing (PTGS), a mechanism of plant viral defense that limits the accumulation of viral RNAs. May mediate silencing suppression through either inhibition of HEN1-mediated siRNA or siRNA demethylation. The sequence is that of Replicase large subunit from Brassicaceae (TVCV).